Here is an 865-residue protein sequence, read N- to C-terminus: Protein translocase subunit SecA (865 aa).

Residues glutamine 93, 111–115 (GEGKT), and aspartate 501 each bind ATP. Residues cysteine 841, cysteine 843, cysteine 852, and cysteine 853 each coordinate Zn(2+).

This sequence belongs to the SecA family. Monomer and homodimer. Part of the essential Sec protein translocation apparatus which comprises SecA, SecYEG and auxiliary proteins SecDF-YajC and YidC. Zn(2+) serves as cofactor.

It localises to the cell inner membrane. Its subcellular location is the cytoplasm. The enzyme catalyses ATP + H2O + cellular proteinSide 1 = ADP + phosphate + cellular proteinSide 2.. Functionally, part of the Sec protein translocase complex. Interacts with the SecYEG preprotein conducting channel. Has a central role in coupling the hydrolysis of ATP to the transfer of proteins into and across the cell membrane, serving as an ATP-driven molecular motor driving the stepwise translocation of polypeptide chains across the membrane. The sequence is that of Protein translocase subunit SecA from Helicobacter pylori (strain P12).